We begin with the raw amino-acid sequence, 347 residues long: DNA-directed RNA polymerase subunit alpha (347 aa).

The interval 1-226 is alpha N-terminal domain (alpha-NTD); it reads MLISQRPTLS…ELFGLARELN (226 aa). The alpha C-terminal domain (alpha-CTD) stretch occupies residues 243 to 347; it reads HIASFALPID…EQDYAETEQL (105 aa).

The protein belongs to the RNA polymerase alpha chain family. In terms of assembly, homodimer. The RNAP catalytic core consists of 2 alpha, 1 beta, 1 beta' and 1 omega subunit. When a sigma factor is associated with the core the holoenzyme is formed, which can initiate transcription.

The enzyme catalyses RNA(n) + a ribonucleoside 5'-triphosphate = RNA(n+1) + diphosphate. In terms of biological role, DNA-dependent RNA polymerase catalyzes the transcription of DNA into RNA using the four ribonucleoside triphosphates as substrates. This is DNA-directed RNA polymerase subunit alpha from Mycobacterium bovis (strain ATCC BAA-935 / AF2122/97).